The primary structure comprises 300 residues: uncharacterized protein (300 aa).

Residues L67 to S179 are a coiled coil. Residues S203–Q285 show a composition bias toward low complexity. Positions S203–L300 are disordered.

This is an uncharacterized protein from Staphylococcus epidermidis (strain ATCC 12228 / FDA PCI 1200).